The sequence spans 181 residues: Lipoprotein signal peptidase (181 aa).

3 helical membrane-spanning segments follow: residues 25–45 (LFYK…QVFI), 86–106 (LVYF…VFMV), and 107–127 (KYSY…NFFD). Residues D138 and D153 contribute to the active site. The helical transmembrane segment at 149 to 169 (FNFADCCITFGFIGLFFCFLI) threads the bilayer.

This sequence belongs to the peptidase A8 family.

Its subcellular location is the cell membrane. It carries out the reaction Release of signal peptides from bacterial membrane prolipoproteins. Hydrolyzes -Xaa-Yaa-Zaa-|-(S,diacylglyceryl)Cys-, in which Xaa is hydrophobic (preferably Leu), and Yaa (Ala or Ser) and Zaa (Gly or Ala) have small, neutral side chains.. Its pathway is protein modification; lipoprotein biosynthesis (signal peptide cleavage). Functionally, this protein specifically catalyzes the removal of signal peptides from prolipoproteins. This is Lipoprotein signal peptidase from Mycoplasma genitalium (strain ATCC 33530 / DSM 19775 / NCTC 10195 / G37) (Mycoplasmoides genitalium).